Here is a 188-residue protein sequence, read N- to C-terminus: dCTP deaminase (188 aa).

Residues 111-116 (KSTYAR), 135-137 (TLE), Q156, Y170, and Q180 each bind dCTP. The active-site Proton donor/acceptor is the E137.

The protein belongs to the dCTP deaminase family. In terms of assembly, homotrimer.

It catalyses the reaction dCTP + H2O + H(+) = dUTP + NH4(+). Its pathway is pyrimidine metabolism; dUMP biosynthesis; dUMP from dCTP (dUTP route): step 1/2. Catalyzes the deamination of dCTP to dUTP. This Acidithiobacillus ferrooxidans (strain ATCC 23270 / DSM 14882 / CIP 104768 / NCIMB 8455) (Ferrobacillus ferrooxidans (strain ATCC 23270)) protein is dCTP deaminase.